The chain runs to 688 residues: Glycine--tRNA ligase beta subunit (688 aa).

Belongs to the class-II aminoacyl-tRNA synthetase family. Tetramer of two alpha and two beta subunits.

It localises to the cytoplasm. It catalyses the reaction tRNA(Gly) + glycine + ATP = glycyl-tRNA(Gly) + AMP + diphosphate. The sequence is that of Glycine--tRNA ligase beta subunit from Shewanella sp. (strain MR-4).